Here is a 157-residue protein sequence, read N- to C-terminus: Nascent polypeptide-associated complex subunit beta-1 (157 aa).

Disordered stretches follow at residues 19–42 and 126–157; these read KVGGTRRKLNKKAGSSAGANKDDT and EKHEAKAPADAEKKDEAIPELVEGQTFDADVE. The NAC-A/B domain maps to 38 to 103; the sequence is NKDDTKLQSQ…PQEKNLQDLF (66 aa). A compositionally biased stretch (basic and acidic residues) spans 126–142; that stretch reads EKHEAKAPADAEKKDEA. Residue Thr-151 is modified to Phosphothreonine.

This sequence belongs to the NAC-beta family. In terms of assembly, part of the nascent polypeptide-associated complex (NAC), consisting of EGD2 and either EGD1 or BTT1. NAC associates with ribosomes via EGD1 or BTT1, and with the CCR4-NOT complex.

The protein resides in the cytoplasm. It is found in the nucleus. Its function is as follows. Component of the nascent polypeptide-associated complex (NAC), a dynamic component of the ribosomal exit tunnel, protecting the emerging polypeptides from interaction with other cytoplasmic proteins to ensure appropriate nascent protein targeting. The NAC complex also promotes mitochondrial protein import by enhancing productive ribosome interactions with the outer mitochondrial membrane and blocks the inappropriate interaction of ribosomes translating non-secretory nascent polypeptides with translocation sites in the membrane of the endoplasmic reticulum. EGD1 may act as a transcription factor that exert a negative effect on the expression of several genes that are transcribed by RNA polymerase II. This chain is Nascent polypeptide-associated complex subunit beta-1 (EGD1), found in Saccharomyces cerevisiae (strain YJM789) (Baker's yeast).